The following is a 23-amino-acid chain: Paralytic peptide 1 (23 aa).

A disulfide bond links Cys7 and Cys19.

It belongs to the GBP/PSP1/paralytic peptide family. As to expression, hemolymph.

Causes rapid, rigid paralysis when injected into Lepidopteran larvae. The physiological role may be to reduce hemolymph loss following injury and promote wound healing. In Manduca sexta (Tobacco hawkmoth), this protein is Paralytic peptide 1.